Consider the following 231-residue polypeptide: Endonuclease NucS (231 aa).

Belongs to the NucS endonuclease family.

It localises to the cytoplasm. Its function is as follows. Cleaves both 3' and 5' ssDNA extremities of branched DNA structures. This chain is Endonuclease NucS, found in Kocuria rhizophila (strain ATCC 9341 / DSM 348 / NBRC 103217 / DC2201).